We begin with the raw amino-acid sequence, 609 residues long: Pair-rule protein odd-paired (609 aa).

A disordered region spans residues 20–41; it reads RMSPNTTASNSNAQQQQQQQLE. The segment covering 22-32 has biased composition (polar residues); that stretch reads SPNTTASNSNA. The C2H2-type 1; atypical zinc-finger motif lies at 210–249; that stretch reads MQCLWIDPDQPGLVPPGGRKTCNKVFHSMHEIVTHLTVEH. 4 consecutive C2H2-type zinc fingers follow at residues 258–285, 291–315, 321–345, and 351–375; these read HACFWVGCSRNGRPFKAKYKLVNHIRVH, FACPHPGCGKVFARSENLKIHKRTH, FKCEHEGCDRRFANSSDRKKHSHVH, and YNCRINGCDKSYTHPSSLRKHMKVH. 2 disordered regions span residues 373 to 550 and 583 to 609; these read KVHG…ASAS and EAMNPLNHFGHHHHHHHLMHPGAATAY. Residues 399-409 show a composition bias toward polar residues; sequence IITGGAQTPPS. Low complexity-rich tracts occupy residues 414 to 434 and 449 to 498; these read GSAGSSSGVSSLSGGSGIKSS and HLGA…LTAH. The segment covering 528–537 has biased composition (basic residues); that stretch reads SHHHHPHHHQ. Low complexity predominate over residues 538 to 550; the sequence is AAPSPGAAAASAS. Over residues 591–601 the composition is skewed to basic residues; sequence FGHHHHHHHLM.

This sequence belongs to the GLI C2H2-type zinc-finger protein family. As to expression, expressed throughout all segment primordia; expressed ubiquitously in the ectoderm and mesoderm precursors.

The protein resides in the nucleus. Functionally, transcription factor essential for parasegmental subdivision of the embryo. It is involved in the activation of wingless (wg) in odd parasegments. It is also required for the timely activation of wg in the remaining parasegments and for the timely activation of engrailed (en) in all parasegments. The chain is Pair-rule protein odd-paired (opa) from Drosophila melanogaster (Fruit fly).